A 1406-amino-acid polypeptide reads, in one-letter code: Ubiquitin carboxyl-terminal hydrolase 6 (1406 aa).

In terms of domain architecture, Rab-GAP TBC spans 100–292 (GIPMNIRGPV…RLWDVYLVEG (193 aa)). Residues 348 to 380 (KLTRKQGDLPPPAKREQGSLAPRPVPASRGGKT) are disordered. One can recognise a USP domain in the interval 532–1369 (TGLSNLGNTC…SAYILFYEQQ (838 aa)). Cysteine 541 acts as the Nucleophile in catalysis. The interval 1120–1231 (HKPLTPQGDE…KKNLDASKEN (112 aa)) is disordered. Positions 1129–1155 (ELSKPRILAREVKKVDAQSSAGKEDML) are enriched in basic and acidic residues. Residues 1156 to 1197 (LSKSPSSLSANISSSPKGSPSSSRKSGTSCPSSKNSSPNSSP) are compositionally biased toward low complexity. Residue histidine 1328 is the Proton acceptor of the active site. The disordered stretch occupies residues 1384–1406 (KMADTSSTDEDSESDYEKYSMLQ).

This sequence belongs to the peptidase C19 family. In terms of assembly, interacts with RAC1 and CDC42. Interacts (via Rab-GAP TBC domain) with ARF6. Interacts with calmodulin (CALM1, CALM2 and/or CALM3); the interaction is calcium-dependent. Post-translationally, monubiquitinated; ubiquitination is calmodulin and calcium dependent. In terms of tissue distribution, testis specific. Expressed in various cancer cell lines.

The protein localises to the cell membrane. It localises to the cytoplasm. It is found in the endosome. It carries out the reaction Thiol-dependent hydrolysis of ester, thioester, amide, peptide and isopeptide bonds formed by the C-terminal Gly of ubiquitin (a 76-residue protein attached to proteins as an intracellular targeting signal).. Functionally, deubiquitinase with an ATP-independent isopeptidase activity, cleaving at the C-terminus of the ubiquitin moiety. Catalyzes its own deubiquitination. In vitro, isoform 2, but not isoform 3, shows deubiquitinating activity. Promotes plasma membrane localization of ARF6 and selectively regulates ARF6-dependent endocytic protein trafficking. Is able to initiate tumorigenesis by inducing the production of matrix metalloproteinases following NF-kappa-B activation. May act as a GTPase-activating protein for RAB3A. The polypeptide is Ubiquitin carboxyl-terminal hydrolase 6 (USP6) (Homo sapiens (Human)).